The chain runs to 386 residues: Patatin-17 (386 aa).

A signal peptide spans 1 to 23 (MATTKSFLILIFMILATTSSTFA). Residues 32–229 (LSIDGGGIRG…TVADPALLSI (198 aa)) form the PNPLA domain. The short motif at 36–41 (GGGIRG) is the GXGXXG element. Positions 75–79 (GTSTG) match the GXSXG motif. The Nucleophile role is filled by serine 77. An N-linked (GlcNAc...) asparagine glycan is attached at asparagine 202. Aspartate 215 (proton acceptor) is an active-site residue. The DGA/G signature appears at 215 to 217 (DGA). A coiled-coil region spans residues 321–384 (ENALTGTTTE…DRKKLRANKA (64 aa)).

This sequence belongs to the patatin family.

It localises to the vacuole. Functionally, non-specific lipolytic acyl hydrolase (LAH), an activity which is thought to be involved in the response of tubers to pathogens. Catalyzes the non-specific hydrolysis of phospholipids, glycolipids, sulfolipids, and mono- and diacylglycerols includng p-nitrophenyl caprate. Confers resistance to southern corn rootworm (SCRW). In Solanum cardiophyllum (Heartleaf nightshade), this protein is Patatin-17.